A 405-amino-acid chain; its full sequence is MAALLLSSHLTAASSSSTTSPTARPAPSFVSFRAANAAPKGARRGWPFLASSVEPPPAASAAQPFRSLAPSETTVLVTGATGYIGRYVVRELLRRGHPVVAVARPRSGLRGRNGPDEVVADLAPARVVFSDVTDAGALRADLSPHGPIHAAVCCLASRGGGVRDSWRVDYRATLHTLQAARGLGAAHFVLLSAVCVQKPLLEFQRAKLRFEGELAAEASRDPSFTYSIVRPTAFFKSLGGQVETVKNGQPYVMFGDGKLCACKPISEEDLAAFIADCISDEGKANKILPIGGPGKALTPLEQGEMLFRLLGREPRFIKVPIQVMDAAIWVLDALAKVFPGVEDAAEFGKIGRYYASESMLVLDPDTGEYSDEMTPSYGSDTLEQFFERVIREGMAGQELGEQTIF.

Residues methionine 1–alanine 58 constitute a chloroplast transit peptide.

Its subcellular location is the plastid. The protein resides in the chloroplast. It carries out the reaction protochlorophyllide a + NADP(+) = 3,8-divinyl protochlorophyllide a + NADPH + H(+). It participates in porphyrin-containing compound metabolism; chlorophyll biosynthesis. Functionally, catalyzes the conversion of divinyl chlorophyllide to monovinyl chlorophyllide. Reduces the 8-vinyl group of the tetrapyrrole to an ethyl group using NADPH as the reductant. Can use (3,8-divinyl)-chlorophyllide a (DV-Chlidea) &gt; (3,8-divinyl)-chlorophyll a (DV-Chla) &gt; (3,8-divinyl)-protochlorophyllide a (DV-Pchlidea) &gt; (3,8-divinyl)-magnesium-protoporphyrin IX monomethyl ester (DV-MPE) &gt; (3,8-divinyl)-magnesium-protoporphyrin IX (DV-Mg-Proto) as substrates. This Oryza sativa subsp. indica (Rice) protein is Divinyl chlorophyllide a 8-vinyl-reductase, chloroplastic (DVR).